We begin with the raw amino-acid sequence, 105 residues long: Small ribosomal subunit protein uS10 (105 aa).

It belongs to the universal ribosomal protein uS10 family. Part of the 30S ribosomal subunit.

In terms of biological role, involved in the binding of tRNA to the ribosomes. In Nostoc punctiforme (strain ATCC 29133 / PCC 73102), this protein is Small ribosomal subunit protein uS10.